Here is a 156-residue protein sequence, read N- to C-terminus: Cyclic pyranopterin monophosphate synthase (156 aa).

Substrate is bound by residues L73–H75 and M110–E111. D125 is an active-site residue.

Belongs to the MoaC family. Homohexamer; trimer of dimers.

The catalysed reaction is (8S)-3',8-cyclo-7,8-dihydroguanosine 5'-triphosphate = cyclic pyranopterin phosphate + diphosphate. It participates in cofactor biosynthesis; molybdopterin biosynthesis. Catalyzes the conversion of (8S)-3',8-cyclo-7,8-dihydroguanosine 5'-triphosphate to cyclic pyranopterin monophosphate (cPMP). The sequence is that of Cyclic pyranopterin monophosphate synthase from Pseudomonas entomophila (strain L48).